We begin with the raw amino-acid sequence, 536 residues long: Protein ST7 homolog (536 aa).

Transmembrane regions (helical) follow at residues 3–23 (CSWT…LFFL) and 49–69 (FYVA…IFEW). Positions 192 to 219 (AEEDTETVAQAENVLRRALRAIENTLST) form a coiled coil. Residues 464-484 (STLGMLIQTFACLAICILAVL) traverse the membrane as a helical segment.

This sequence belongs to the ST7 family.

The protein resides in the membrane. The sequence is that of Protein ST7 homolog from Caenorhabditis briggsae.